A 326-amino-acid polypeptide reads, in one-letter code: Putative HTH-type transcriptional regulatory protein MMP0678 (326 aa).

Positions 128 to 183 (LRETREKLKISVGELAEVSRVSRKTIYKYEQNEANPSAEVAIKIEEYLDVPLIKGI) constitute an HTH cro/C1-type domain. Positions 139-158 (VGELAEVSRVSRKTIYKYEQ) form a DNA-binding region, H-T-H motif.

The chain is Putative HTH-type transcriptional regulatory protein MMP0678 from Methanococcus maripaludis (strain DSM 14266 / JCM 13030 / NBRC 101832 / S2 / LL).